The chain runs to 140 residues: Nucleoside diphosphate kinase (140 aa).

Lys11, Phe59, Arg87, Thr93, Arg104, and Asn114 together coordinate ATP. Residue His117 is the Pros-phosphohistidine intermediate of the active site.

Belongs to the NDK family. As to quaternary structure, homotetramer. It depends on Mg(2+) as a cofactor.

It localises to the cytoplasm. The catalysed reaction is a 2'-deoxyribonucleoside 5'-diphosphate + ATP = a 2'-deoxyribonucleoside 5'-triphosphate + ADP. It catalyses the reaction a ribonucleoside 5'-diphosphate + ATP = a ribonucleoside 5'-triphosphate + ADP. Major role in the synthesis of nucleoside triphosphates other than ATP. The ATP gamma phosphate is transferred to the NDP beta phosphate via a ping-pong mechanism, using a phosphorylated active-site intermediate. This is Nucleoside diphosphate kinase from Azorhizobium caulinodans (strain ATCC 43989 / DSM 5975 / JCM 20966 / LMG 6465 / NBRC 14845 / NCIMB 13405 / ORS 571).